The chain runs to 93 residues: Neutrophil cationic peptide 1 type A (93 aa).

Residues M1–A19 form the signal peptide. A propeptide spanning residues E20–G62 is cleaved from the precursor. 3 cysteine pairs are disulfide-bonded: C65-C93, C67-C82, and C72-C92.

It belongs to the alpha-defensin family.

Its subcellular location is the secreted. Has antibiotic, anti-fungi and antiviral activity. This chain is Neutrophil cationic peptide 1 type A, found in Cavia porcellus (Guinea pig).